The sequence spans 193 residues: tRNA(Phe) 7-((3-amino-3-carboxypropyl)-4-demethylwyosine(37)-N(4))-methyltransferase (193 aa).

This sequence belongs to the TYW3 family.

The enzyme catalyses 4-demethyl-7-[(3S)-3-amino-3-carboxypropyl]wyosine(37) in tRNA(Phe) + S-adenosyl-L-methionine = 7-[(3S)-3-amino-3-carboxypropyl]wyosine(37) in tRNA(Phe) + S-adenosyl-L-homocysteine + H(+). Functionally, S-adenosyl-L-methionine-dependent methyltransferase that acts as a component of the wyosine derivatives biosynthesis pathway. Probably methylates N-4 position of wybutosine-86 to produce wybutosine-72. This chain is tRNA(Phe) 7-((3-amino-3-carboxypropyl)-4-demethylwyosine(37)-N(4))-methyltransferase, found in Methanocaldococcus jannaschii (strain ATCC 43067 / DSM 2661 / JAL-1 / JCM 10045 / NBRC 100440) (Methanococcus jannaschii).